We begin with the raw amino-acid sequence, 350 residues long: Formimidoylglutamase (350 aa).

Residues His-130, Asp-165, His-167, Asp-169, Asp-269, and Asp-271 each contribute to the Mn(2+) site.

Belongs to the arginase family. It depends on Mn(2+) as a cofactor.

It catalyses the reaction N-formimidoyl-L-glutamate + H2O = formamide + L-glutamate. The protein operates within amino-acid degradation; L-histidine degradation into L-glutamate; L-glutamate from N-formimidoyl-L-glutamate (hydrolase route): step 1/1. Catalyzes the conversion of N-formimidoyl-L-glutamate to L-glutamate and formamide. In Aliivibrio fischeri (strain ATCC 700601 / ES114) (Vibrio fischeri), this protein is Formimidoylglutamase.